A 486-amino-acid polypeptide reads, in one-letter code: Protein hold'em (486 aa).

The OB DNA-binding region spans 166-285; sequence IITTNVNLLV…DCRLLLAFAA (120 aa).

It belongs to the MEIOB family. Interacts with mei-9 and Ercc1.

In terms of biological role, single-stranded DNA-binding protein required for meiosis. May be involved in the resolution of recombination intermediates into crossovers in the meiotic recombination pathway. The protein is Protein hold'em (hdm) of Drosophila melanogaster (Fruit fly).